The following is a 465-amino-acid chain: Probable protein phosphatase 2C 71 (465 aa).

3 disordered regions span residues 14–47 (RPCK…ACRA), 68–119 (RPRD…GEVT), and 133–191 (SGGA…PAEE). Residues 18-30 (LAPPPPPPLPVSP) are compositionally biased toward pro residues. 2 stretches are compositionally biased toward low complexity: residues 84-106 (AVAP…AAAE) and 133-143 (SGGAEATATSG). Residues 222-460 (ASGAAILPHP…DDIAVVVSIV (239 aa)) form the PPM-type phosphatase domain. The Mn(2+) site is built by Asp-254, Gly-255, Asp-384, and Asp-451.

It belongs to the PP2C family. Mg(2+) serves as cofactor. Requires Mn(2+) as cofactor.

The catalysed reaction is O-phospho-L-seryl-[protein] + H2O = L-seryl-[protein] + phosphate. The enzyme catalyses O-phospho-L-threonyl-[protein] + H2O = L-threonyl-[protein] + phosphate. This chain is Probable protein phosphatase 2C 71, found in Oryza sativa subsp. japonica (Rice).